We begin with the raw amino-acid sequence, 305 residues long: tRNA pseudouridine synthase B (305 aa).

Residue Asp-48 is the Nucleophile of the active site.

Belongs to the pseudouridine synthase TruB family. Type 1 subfamily.

The catalysed reaction is uridine(55) in tRNA = pseudouridine(55) in tRNA. Its function is as follows. Responsible for synthesis of pseudouridine from uracil-55 in the psi GC loop of transfer RNAs. The protein is tRNA pseudouridine synthase B of Pseudomonas putida (strain GB-1).